A 497-amino-acid polypeptide reads, in one-letter code: Serine hydroxymethyltransferase (497 aa).

(6S)-5,6,7,8-tetrahydrofolate is bound by residues leucine 176 and 180-182 (GHL). Lysine 289 carries the N6-(pyridoxal phosphate)lysine modification.

The protein belongs to the SHMT family. As to quaternary structure, homodimer. The cofactor is pyridoxal 5'-phosphate.

Its subcellular location is the cytoplasm. It catalyses the reaction (6R)-5,10-methylene-5,6,7,8-tetrahydrofolate + glycine + H2O = (6S)-5,6,7,8-tetrahydrofolate + L-serine. Its pathway is one-carbon metabolism; tetrahydrofolate interconversion. The protein operates within amino-acid biosynthesis; glycine biosynthesis; glycine from L-serine: step 1/1. In terms of biological role, catalyzes the reversible interconversion of serine and glycine with tetrahydrofolate (THF) serving as the one-carbon carrier. This reaction serves as the major source of one-carbon groups required for the biosynthesis of purines, thymidylate, methionine, and other important biomolecules. Also exhibits THF-independent aldolase activity toward beta-hydroxyamino acids, producing glycine and aldehydes, via a retro-aldol mechanism. The sequence is that of Serine hydroxymethyltransferase from Chlamydia muridarum (strain MoPn / Nigg).